Consider the following 905-residue polypeptide: Nitrate reductase [NADPH] (905 aa).

Residues 1–42 (METSTTTTLLQQERIPENSEPISTHIHTHSLPPTPPGTAKPS) form a disordered region. C179 is a binding site for Mo-molybdopterin. The region spanning 546-621 (NRKITIEELK…LPTYHIGTLD (76 aa)) is the Cytochrome b5 heme-binding domain. Residues H581 and H604 each contribute to the heme site. The FAD-binding FR-type domain maps to 648–759 (KTWSKAILDK…KGPTGKFVYH (112 aa)). Residues 702 to 705 (RSYT), 719 to 723 (LIKIY), 733 to 735 (VMT), S783, and T786 contribute to the FAD site. Position 875 to 884 (875 to 884 (LLLVCGPPPM)) interacts with NADP(+).

The protein belongs to the nitrate reductase family. As to quaternary structure, homodimer. The cofactor is FAD. Requires heme as cofactor. Mo-molybdopterin is required as a cofactor.

The catalysed reaction is nitrite + NADP(+) + H2O = nitrate + NADPH + H(+). Nitrate reductase is a key enzyme involved in the first step of nitrate assimilation in plants, fungi and bacteria. The protein is Nitrate reductase [NADPH] (NIA) of Fusarium oxysporum (Fusarium vascular wilt).